A 355-amino-acid chain; its full sequence is Protein FIP1 (355 aa).

A run of 4 helical transmembrane segments spans residues 42-62 (YLYMLLLAGYAILAAGAPWMF), 72-92 (LLCCCDVALLVVTGVFQQYFV), 113-133 (VVRLPFAIAAYGTAAMLLVIV), and 149-169 (IIMLVEAVGAGFFMGLYIGYV). Residues 220–337 (LHFLSEEILC…RMSNSELQKE (118 aa)) adopt a coiled-coil conformation. Residues 331-340 (NSELQKEVAS) show a composition bias toward basic and acidic residues. The disordered stretch occupies residues 331-355 (NSELQKEVASTRRKQMLETTTSEQP).

This sequence belongs to the TMEM192 family. In terms of assembly, interacts with FRI.

It is found in the membrane. In Arabidopsis thaliana (Mouse-ear cress), this protein is Protein FIP1.